Consider the following 181-residue polypeptide: Peptidyl-tRNA hydrolase (181 aa).

A tRNA-binding site is contributed by Tyr14. The active-site Proton acceptor is the His19. 3 residues coordinate tRNA: Tyr60, Asn62, and Asn108.

The protein belongs to the PTH family. In terms of assembly, monomer.

Its subcellular location is the cytoplasm. It carries out the reaction an N-acyl-L-alpha-aminoacyl-tRNA + H2O = an N-acyl-L-amino acid + a tRNA + H(+). Functionally, hydrolyzes ribosome-free peptidyl-tRNAs (with 1 or more amino acids incorporated), which drop off the ribosome during protein synthesis, or as a result of ribosome stalling. In terms of biological role, catalyzes the release of premature peptidyl moieties from peptidyl-tRNA molecules trapped in stalled 50S ribosomal subunits, and thus maintains levels of free tRNAs and 50S ribosomes. The polypeptide is Peptidyl-tRNA hydrolase (Metamycoplasma arthritidis (strain 158L3-1) (Mycoplasma arthritidis)).